Reading from the N-terminus, the 424-residue chain is Enolase (424 aa).

Residue Gln-163 participates in (2R)-2-phosphoglycerate binding. Glu-205 (proton donor) is an active-site residue. Asp-242, Glu-285, and Asp-312 together coordinate Mg(2+). Residues Lys-337, Arg-366, Ser-367, and Lys-388 each contribute to the (2R)-2-phosphoglycerate site. The active-site Proton acceptor is Lys-337.

The protein belongs to the enolase family. Requires Mg(2+) as cofactor.

It is found in the cytoplasm. The protein resides in the secreted. Its subcellular location is the cell surface. The catalysed reaction is (2R)-2-phosphoglycerate = phosphoenolpyruvate + H2O. Its pathway is carbohydrate degradation; glycolysis; pyruvate from D-glyceraldehyde 3-phosphate: step 4/5. Functionally, catalyzes the reversible conversion of 2-phosphoglycerate (2-PG) into phosphoenolpyruvate (PEP). It is essential for the degradation of carbohydrates via glycolysis. This Sphingopyxis alaskensis (strain DSM 13593 / LMG 18877 / RB2256) (Sphingomonas alaskensis) protein is Enolase.